Reading from the N-terminus, the 188-residue chain is MEARFTRGKSALLERALARPRTEVSLSAFALLFSELVQHCQSRVFSVAELQSRLAALGRQVGARVLDALVAREKGARRETKVLGALLFVKGAVWKALFGKEADKLEQANDDARTFYIIEREPLINTYISVPKENSTLNCASFTAGIVEAVLTHSGFPAKVTAHWHKGTTLMIKFEEAVIARDRALEGR.

Phosphoserine is present on S10.

The protein belongs to the TRAPP small subunits family. BET3 subfamily. As to quaternary structure, component of the multisubunit TRAPP (transport protein particle) complex, which includes at least TRAPPC2, TRAPPC2L, TRAPPC3, TRAPPC3L, TRAPPC4, TRAPPC5, TRAPPC8, TRAPPC9, TRAPPC10, TRAPPC11 and TRAPPC12.

Its subcellular location is the golgi apparatus. The protein localises to the cis-Golgi network. It is found in the endoplasmic reticulum. In terms of biological role, may play a role in vesicular transport from endoplasmic reticulum to Golgi. The chain is Trafficking protein particle complex subunit 5 (TRAPPC5) from Homo sapiens (Human).